The following is a 250-amino-acid chain: 5-oxoprolinase subunit A (250 aa).

Belongs to the LamB/PxpA family. As to quaternary structure, forms a complex composed of PxpA, PxpB and PxpC.

It carries out the reaction 5-oxo-L-proline + ATP + 2 H2O = L-glutamate + ADP + phosphate + H(+). Catalyzes the cleavage of 5-oxoproline to form L-glutamate coupled to the hydrolysis of ATP to ADP and inorganic phosphate. The sequence is that of 5-oxoprolinase subunit A from Staphylococcus aureus (strain MRSA252).